Here is a 428-residue protein sequence, read N- to C-terminus: 4-hydroxy-3-methylbut-2-en-1-yl diphosphate synthase (flavodoxin) (428 aa).

4 residues coordinate [4Fe-4S] cluster: C300, C303, C346, and E353.

The protein belongs to the IspG family. [4Fe-4S] cluster is required as a cofactor.

It catalyses the reaction (2E)-4-hydroxy-3-methylbut-2-enyl diphosphate + oxidized [flavodoxin] + H2O + 2 H(+) = 2-C-methyl-D-erythritol 2,4-cyclic diphosphate + reduced [flavodoxin]. The protein operates within isoprenoid biosynthesis; isopentenyl diphosphate biosynthesis via DXP pathway; isopentenyl diphosphate from 1-deoxy-D-xylulose 5-phosphate: step 5/6. Functionally, converts 2C-methyl-D-erythritol 2,4-cyclodiphosphate (ME-2,4cPP) into 1-hydroxy-2-methyl-2-(E)-butenyl 4-diphosphate. The polypeptide is 4-hydroxy-3-methylbut-2-en-1-yl diphosphate synthase (flavodoxin) (Methylobacillus flagellatus (strain ATCC 51484 / DSM 6875 / VKM B-1610 / KT)).